The primary structure comprises 458 residues: MIVNISAKMILSICFTFLSFFKATHAMDLDTTSKTSICDATALIQGGMLDYYEGTRYGGTVGMFQSPYYWWHAGEAFGGMLENWFLCENDTYQELLYDALLAQTGSNYDYIPSNQTMVEGNDDQGIWGITVMGAVERNFTDPGDGKPGWLAMVQAVFNTMYSRWDSEHCGGGLRWQIFTWNSGYNYKNTVSNACLFQIAARLGRYTGNTTYLEVAEQVFDWLVDVGYVVLNDTANVFDGAEIDTNCTDITKIEWTYNHGIVLGGLAYMYNATNGTGEWETSLTKILNGAKSYFFKDSIMYESACQDYGTCNTDQRTFKSIFSRMLGLTSVMAPFTRDTIDDLIKTSAEAAAKSCNGGTDGHTCGLNWQKQTNDGYYGLGEQMSALEVIQNLLIHDRPAPYKEDNGGTSKGDANAGMNSSTTNVLQNNLNIKKGDRAGAAIITAVILSVLTGGAVWMLF.

The signal sequence occupies residues 1-26 (MIVNISAKMILSICFTFLSFFKATHA). 9 N-linked (GlcNAc...) asparagine glycosylation sites follow: Asn-89, Asn-114, Asn-138, Asn-208, Asn-231, Asn-245, Asn-270, Asn-273, and Asn-417. Residues 399–418 (PYKEDNGGTSKGDANAGMNS) are disordered. Gly-437 carries GPI-anchor amidated glycine lipidation. Residues 438-458 (AAIITAVILSVLTGGAVWMLF) constitute a propeptide, removed in mature form.

Belongs to the glycosyl hydrolase 76 family. In terms of processing, N-glycosylated.

It is found in the cell membrane. The catalysed reaction is Random hydrolysis of (1-&gt;6)-alpha-D-mannosidic linkages in unbranched (1-&gt;6)-mannans.. Functionally, required for normal synthesis of the cell wall. This chain is Mannan endo-1,6-alpha-mannosidase DFG5 (DFG5), found in Saccharomyces cerevisiae (strain ATCC 204508 / S288c) (Baker's yeast).